Consider the following 261-residue polypeptide: Cytochrome c oxidase subunit 3 (261 aa).

Residues 1–15 are Mitochondrial matrix-facing; sequence MTHQTHACHMVNPSP. A helical membrane pass occupies residues 16-34; that stretch reads WPLTGALSGLLMTSGLIMW. At 35 to 40 the chain is on the mitochondrial intermembrane side; that stretch reads FHFNST. Residues 41–66 traverse the membrane as a helical segment; that stretch reads TLLMLGLTTNMLTMYQWWRDVIREST. The Mitochondrial matrix portion of the chain corresponds to 67 to 72; it reads FQGHHT. The chain crosses the membrane as a helical span at residues 73–105; it reads PNVQKGLRYGMILFIISEVLFFTGFFWAFYHSS. Residues 106-128 are Mitochondrial intermembrane-facing; it reads LAPTPELGGCWPPTGIHPLNPLE. A helical membrane pass occupies residues 129–152; it reads VPLLNTSVLLASGVSITWAHHSLM. The Mitochondrial matrix segment spans residues 153 to 155; sequence EGN. The helical transmembrane segment at 156-183 threads the bilayer; sequence RNHMLQALFITIALGVYFTLLQASEYYE. Topologically, residues 184-190 are mitochondrial intermembrane; that stretch reads APFTISD. A helical transmembrane segment spans residues 191 to 223; that stretch reads GVYGSTFFVATGFHGLHVIIGSTFLIVCFFRQL. Residues 224 to 232 lie on the Mitochondrial matrix side of the membrane; sequence KFHFTSSHH. The helical transmembrane segment at 233 to 256 threads the bilayer; sequence FGFEAAAWYWHFVDVVWLFLYVSI. At 257–261 the chain is on the mitochondrial intermembrane side; sequence YWWGS.

It belongs to the cytochrome c oxidase subunit 3 family. Component of the cytochrome c oxidase (complex IV, CIV), a multisubunit enzyme composed of 14 subunits. The complex is composed of a catalytic core of 3 subunits MT-CO1, MT-CO2 and MT-CO3, encoded in the mitochondrial DNA, and 11 supernumerary subunits COX4I, COX5A, COX5B, COX6A, COX6B, COX6C, COX7A, COX7B, COX7C, COX8 and NDUFA4, which are encoded in the nuclear genome. The complex exists as a monomer or a dimer and forms supercomplexes (SCs) in the inner mitochondrial membrane with NADH-ubiquinone oxidoreductase (complex I, CI) and ubiquinol-cytochrome c oxidoreductase (cytochrome b-c1 complex, complex III, CIII), resulting in different assemblies (supercomplex SCI(1)III(2)IV(1) and megacomplex MCI(2)III(2)IV(2)).

Its subcellular location is the mitochondrion inner membrane. It carries out the reaction 4 Fe(II)-[cytochrome c] + O2 + 8 H(+)(in) = 4 Fe(III)-[cytochrome c] + 2 H2O + 4 H(+)(out). Its function is as follows. Component of the cytochrome c oxidase, the last enzyme in the mitochondrial electron transport chain which drives oxidative phosphorylation. The respiratory chain contains 3 multisubunit complexes succinate dehydrogenase (complex II, CII), ubiquinol-cytochrome c oxidoreductase (cytochrome b-c1 complex, complex III, CIII) and cytochrome c oxidase (complex IV, CIV), that cooperate to transfer electrons derived from NADH and succinate to molecular oxygen, creating an electrochemical gradient over the inner membrane that drives transmembrane transport and the ATP synthase. Cytochrome c oxidase is the component of the respiratory chain that catalyzes the reduction of oxygen to water. Electrons originating from reduced cytochrome c in the intermembrane space (IMS) are transferred via the dinuclear copper A center (CU(A)) of subunit 2 and heme A of subunit 1 to the active site in subunit 1, a binuclear center (BNC) formed by heme A3 and copper B (CU(B)). The BNC reduces molecular oxygen to 2 water molecules using 4 electrons from cytochrome c in the IMS and 4 protons from the mitochondrial matrix. This is Cytochrome c oxidase subunit 3 (MT-CO3) from Gazella saudiya (Saudi gazelle).